The chain runs to 332 residues: T-cell leukemia homeobox protein 1 (332 aa).

A DNA-binding region (homeobox) is located at residues 203 to 262 (KKKPRTSFTRLQICELEKRFHRQKYLASAERAALAKALKMTDAQVKTWFQNRRTKWRRQT). N6-acetyllysine is present on Lys-238.

Expressed in various embryonic tissues, including branchial arches, some component of the nervous system and spleen.

It is found in the nucleus. Controls the genesis of the spleen. Binds to the DNA sequence 5'-GGCGGTAAGTGG-3'. The polypeptide is T-cell leukemia homeobox protein 1 (Tlx1) (Mus musculus (Mouse)).